A 228-amino-acid polypeptide reads, in one-letter code: L-ribulose-5-phosphate 4-epimerase UlaF (228 aa).

Substrate is bound by residues 26-27 (GN), 43-44 (SG), and 72-73 (SS). Positions 74, 93, and 95 each coordinate Zn(2+). D118 serves as the catalytic Proton donor/acceptor. Residue H167 coordinates Zn(2+). The active-site Proton donor/acceptor is the Y225.

The protein belongs to the aldolase class II family. AraD/FucA subfamily. Zn(2+) is required as a cofactor.

The enzyme catalyses L-ribulose 5-phosphate = D-xylulose 5-phosphate. It participates in cofactor degradation; L-ascorbate degradation; D-xylulose 5-phosphate from L-ascorbate: step 4/4. Functionally, catalyzes the isomerization of L-ribulose 5-phosphate to D-xylulose 5-phosphate. Is involved in the anaerobic L-ascorbate utilization. The chain is L-ribulose-5-phosphate 4-epimerase UlaF from Escherichia coli (strain 55989 / EAEC).